We begin with the raw amino-acid sequence, 54 residues long: ATP synthase protein 8 (54 aa).

The helical transmembrane segment at 8-28 (WWLLNFFLGWTSLLVIFIILL) threads the bilayer.

The protein belongs to the ATPase protein 8 family. F-type ATPases have 2 components, CF(1) - the catalytic core - and CF(0) - the membrane proton channel.

It localises to the mitochondrion membrane. Its function is as follows. Mitochondrial membrane ATP synthase (F(1)F(0) ATP synthase or Complex V) produces ATP from ADP in the presence of a proton gradient across the membrane which is generated by electron transport complexes of the respiratory chain. F-type ATPases consist of two structural domains, F(1) - containing the extramembraneous catalytic core and F(0) - containing the membrane proton channel, linked together by a central stalk and a peripheral stalk. During catalysis, ATP synthesis in the catalytic domain of F(1) is coupled via a rotary mechanism of the central stalk subunits to proton translocation. Part of the complex F(0) domain. Minor subunit located with subunit a in the membrane. The protein is ATP synthase protein 8 (MT-ATP8) of Patiria pectinifera (Starfish).